The sequence spans 388 residues: Arginine biosynthesis bifunctional protein ArgJ (388 aa).

6 residues coordinate substrate: threonine 150, lysine 172, threonine 183, glutamate 263, asparagine 383, and threonine 388. The active-site Nucleophile is the threonine 183.

Belongs to the ArgJ family. Heterotetramer of two alpha and two beta chains.

The protein resides in the cytoplasm. It catalyses the reaction N(2)-acetyl-L-ornithine + L-glutamate = N-acetyl-L-glutamate + L-ornithine. The catalysed reaction is L-glutamate + acetyl-CoA = N-acetyl-L-glutamate + CoA + H(+). The protein operates within amino-acid biosynthesis; L-arginine biosynthesis; L-ornithine and N-acetyl-L-glutamate from L-glutamate and N(2)-acetyl-L-ornithine (cyclic): step 1/1. It functions in the pathway amino-acid biosynthesis; L-arginine biosynthesis; N(2)-acetyl-L-ornithine from L-glutamate: step 1/4. In terms of biological role, catalyzes two activities which are involved in the cyclic version of arginine biosynthesis: the synthesis of N-acetylglutamate from glutamate and acetyl-CoA as the acetyl donor, and of ornithine by transacetylation between N(2)-acetylornithine and glutamate. This chain is Arginine biosynthesis bifunctional protein ArgJ, found in Corynebacterium efficiens (strain DSM 44549 / YS-314 / AJ 12310 / JCM 11189 / NBRC 100395).